Here is a 354-residue protein sequence, read N- to C-terminus: Lipoyl synthase, mitochondrial (354 aa).

[4Fe-4S] cluster-binding residues include C91, C96, C102, C122, C126, C129, and S337. In terms of domain architecture, Radical SAM core spans 107 to 326 (DDSLATATIM…AEYSKKLGFL (220 aa)).

It belongs to the radical SAM superfamily. Lipoyl synthase family. [4Fe-4S] cluster is required as a cofactor.

The protein resides in the mitochondrion. The enzyme catalyses [[Fe-S] cluster scaffold protein carrying a second [4Fe-4S](2+) cluster] + N(6)-octanoyl-L-lysyl-[protein] + 2 oxidized [2Fe-2S]-[ferredoxin] + 2 S-adenosyl-L-methionine + 4 H(+) = [[Fe-S] cluster scaffold protein] + N(6)-[(R)-dihydrolipoyl]-L-lysyl-[protein] + 4 Fe(3+) + 2 hydrogen sulfide + 2 5'-deoxyadenosine + 2 L-methionine + 2 reduced [2Fe-2S]-[ferredoxin]. The protein operates within protein modification; protein lipoylation via endogenous pathway; protein N(6)-(lipoyl)lysine from octanoyl-[acyl-carrier-protein]: step 2/2. Functionally, catalyzes the radical-mediated insertion of two sulfur atoms into the C-6 and C-8 positions of the octanoyl moiety bound to the lipoyl domains of lipoate-dependent enzymes, thereby converting the octanoylated domains into lipoylated derivatives. This is Lipoyl synthase, mitochondrial from Caenorhabditis elegans.